Consider the following 155-residue polypeptide: Small ribosomal subunit protein uS7 (155 aa).

Belongs to the universal ribosomal protein uS7 family. In terms of assembly, part of the 30S ribosomal subunit. Contacts proteins S9 and S11.

Functionally, one of the primary rRNA binding proteins, it binds directly to 16S rRNA where it nucleates assembly of the head domain of the 30S subunit. Is located at the subunit interface close to the decoding center, probably blocks exit of the E-site tRNA. In Kosmotoga olearia (strain ATCC BAA-1733 / DSM 21960 / TBF 19.5.1), this protein is Small ribosomal subunit protein uS7.